We begin with the raw amino-acid sequence, 207 residues long: Large ribosomal subunit protein uL4 (207 aa).

The interval 48 to 75 (THSVKNRSAVRGGGRKPWRQKGTGRARQ) is disordered. Over residues 60–71 (GGRKPWRQKGTG) the composition is skewed to basic residues.

It belongs to the universal ribosomal protein uL4 family. In terms of assembly, part of the 50S ribosomal subunit.

Functionally, one of the primary rRNA binding proteins, this protein initially binds near the 5'-end of the 23S rRNA. It is important during the early stages of 50S assembly. It makes multiple contacts with different domains of the 23S rRNA in the assembled 50S subunit and ribosome. In terms of biological role, forms part of the polypeptide exit tunnel. This Staphylococcus carnosus (strain TM300) protein is Large ribosomal subunit protein uL4.